A 188-amino-acid polypeptide reads, in one-letter code: Elongation factor P (188 aa).

At Lys34 the chain carries N6-(3,6-diaminohexanoyl)-5-hydroxylysine.

It belongs to the elongation factor P family. In terms of processing, may be beta-lysylated on the epsilon-amino group of Lys-34 by the combined action of EpmA and EpmB, and then hydroxylated on the C5 position of the same residue by EpmC (if this protein is present). Lysylation is critical for the stimulatory effect of EF-P on peptide-bond formation. The lysylation moiety may extend toward the peptidyltransferase center and stabilize the terminal 3-CCA end of the tRNA. Hydroxylation of the C5 position on Lys-34 may allow additional potential stabilizing hydrogen-bond interactions with the P-tRNA.

It localises to the cytoplasm. The protein operates within protein biosynthesis; polypeptide chain elongation. Its function is as follows. Involved in peptide bond synthesis. Alleviates ribosome stalling that occurs when 3 or more consecutive Pro residues or the sequence PPG is present in a protein, possibly by augmenting the peptidyl transferase activity of the ribosome. Modification of Lys-34 is required for alleviation. The sequence is that of Elongation factor P from Serratia proteamaculans (strain 568).